Here is a 78-residue protein sequence, read N- to C-terminus: UPF0349 protein BPUM_2879 (78 aa).

This sequence belongs to the UPF0349 family.

The polypeptide is UPF0349 protein BPUM_2879 (Bacillus pumilus (strain SAFR-032)).